A 359-amino-acid polypeptide reads, in one-letter code: tRNA-specific 2-thiouridylase MnmA (359 aa).

ATP is bound by residues 10 to 17 and L36; that span reads GISGGVDS. C101 (nucleophile) is an active-site residue. Residues C101 and C197 are joined by a disulfide bond. G125 provides a ligand contact to ATP. An interaction with tRNA region spans residues 147–149; the sequence is KDQ. The active-site Cysteine persulfide intermediate is the C197. The interval 306–307 is interaction with tRNA; the sequence is RY.

The protein belongs to the MnmA/TRMU family.

It is found in the cytoplasm. It carries out the reaction S-sulfanyl-L-cysteinyl-[protein] + uridine(34) in tRNA + AH2 + ATP = 2-thiouridine(34) in tRNA + L-cysteinyl-[protein] + A + AMP + diphosphate + H(+). Its function is as follows. Catalyzes the 2-thiolation of uridine at the wobble position (U34) of tRNA, leading to the formation of s(2)U34. This is tRNA-specific 2-thiouridylase MnmA from Chlorobium chlorochromatii (strain CaD3).